Reading from the N-terminus, the 243-residue chain is UPF0502 protein RALTA_B0914 (243 aa).

Residues 1-10 (MPSTPESDPT) show a composition bias toward polar residues. The interval 1-23 (MPSTPESDPTQPGDRPARPALRP) is disordered.

This sequence belongs to the UPF0502 family.

The chain is UPF0502 protein RALTA_B0914 from Cupriavidus taiwanensis (strain DSM 17343 / BCRC 17206 / CCUG 44338 / CIP 107171 / LMG 19424 / R1) (Ralstonia taiwanensis (strain LMG 19424)).